A 632-amino-acid chain; its full sequence is Bifunctional protein GlmU (632 aa).

Residues 1–229 are pyrophosphorylase; it reads MAERELSVAI…PQEIVGVNDR (229 aa). UDP-N-acetyl-alpha-D-glucosamine is bound by residues 11–14, K25, Q76, and 81–82; these read LAAG and GT. D106 serves as a coordination point for Mg(2+). Residues G143, E158, N173, and N227 each coordinate UDP-N-acetyl-alpha-D-glucosamine. Residue N227 coordinates Mg(2+). Positions 230 to 250 are linker; that stretch reads RQLAQAYQILQDRLKEAWMEA. The N-acetyltransferase stretch occupies residues 251–632; that stretch reads GVTFVDPDSS…ADNSRPKSLQ (382 aa). UDP-N-acetyl-alpha-D-glucosamine-binding residues include R332 and K350. H362 functions as the Proton acceptor in the catalytic mechanism. Residues Y365 and N376 each contribute to the UDP-N-acetyl-alpha-D-glucosamine site. Acetyl-CoA-binding positions include A379, 385–386, A422, and R441; that span reads NY. The interval 600 to 632 is disordered; it reads VAGDPCWPSPPPQPQQNQQTKPEADNSRPKSLQ. Over residues 621-632 the composition is skewed to basic and acidic residues; sequence PEADNSRPKSLQ.

It in the N-terminal section; belongs to the N-acetylglucosamine-1-phosphate uridyltransferase family. In the C-terminal section; belongs to the transferase hexapeptide repeat family. In terms of assembly, homotrimer. Requires Mg(2+) as cofactor.

The protein resides in the cytoplasm. It carries out the reaction alpha-D-glucosamine 1-phosphate + acetyl-CoA = N-acetyl-alpha-D-glucosamine 1-phosphate + CoA + H(+). The catalysed reaction is N-acetyl-alpha-D-glucosamine 1-phosphate + UTP + H(+) = UDP-N-acetyl-alpha-D-glucosamine + diphosphate. The protein operates within nucleotide-sugar biosynthesis; UDP-N-acetyl-alpha-D-glucosamine biosynthesis; N-acetyl-alpha-D-glucosamine 1-phosphate from alpha-D-glucosamine 6-phosphate (route II): step 2/2. It participates in nucleotide-sugar biosynthesis; UDP-N-acetyl-alpha-D-glucosamine biosynthesis; UDP-N-acetyl-alpha-D-glucosamine from N-acetyl-alpha-D-glucosamine 1-phosphate: step 1/1. Its pathway is bacterial outer membrane biogenesis; LPS lipid A biosynthesis. Functionally, catalyzes the last two sequential reactions in the de novo biosynthetic pathway for UDP-N-acetylglucosamine (UDP-GlcNAc). The C-terminal domain catalyzes the transfer of acetyl group from acetyl coenzyme A to glucosamine-1-phosphate (GlcN-1-P) to produce N-acetylglucosamine-1-phosphate (GlcNAc-1-P), which is converted into UDP-GlcNAc by the transfer of uridine 5-monophosphate (from uridine 5-triphosphate), a reaction catalyzed by the N-terminal domain. In Synechococcus sp. (strain JA-2-3B'a(2-13)) (Cyanobacteria bacterium Yellowstone B-Prime), this protein is Bifunctional protein GlmU.